The primary structure comprises 194 residues: Putative manganese efflux pump MntP (194 aa).

6 helical membrane passes run 3–23, 37–57, 69–89, 110–132, 147–167, and 172–192; these read PFSIVLIGFAMSTDAFAAAIG, LRAGLIFGCIEAITPVIGWLL, DHWIAFVLLGALGTHMIVAGL, LGLATTGFATSIDAMAVGVSLAF, CTFSMVTAGVMLGRALGNLIG, and MLGGLILVIVGSVILYEHLSG.

It belongs to the MntP (TC 9.B.29) family.

It is found in the cell inner membrane. Its function is as follows. Probably functions as a manganese efflux pump. In Xanthomonas axonopodis pv. citri (strain 306), this protein is Putative manganese efflux pump MntP.